We begin with the raw amino-acid sequence, 305 residues long: Aspartate carbamoyltransferase catalytic subunit (305 aa).

Residues Arg52 and Thr53 each contribute to the carbamoyl phosphate site. L-aspartate is bound at residue Lys80. Residues Arg102, His132, and Gln135 each coordinate carbamoyl phosphate. Residues Arg165 and Arg217 each contribute to the L-aspartate site. Positions 258 and 259 each coordinate carbamoyl phosphate.

The protein belongs to the aspartate/ornithine carbamoyltransferase superfamily. ATCase family. As to quaternary structure, heterododecamer (2C3:3R2) of six catalytic PyrB chains organized as two trimers (C3), and six regulatory PyrI chains organized as three dimers (R2).

The catalysed reaction is carbamoyl phosphate + L-aspartate = N-carbamoyl-L-aspartate + phosphate + H(+). Its pathway is pyrimidine metabolism; UMP biosynthesis via de novo pathway; (S)-dihydroorotate from bicarbonate: step 2/3. Catalyzes the condensation of carbamoyl phosphate and aspartate to form carbamoyl aspartate and inorganic phosphate, the committed step in the de novo pyrimidine nucleotide biosynthesis pathway. The protein is Aspartate carbamoyltransferase catalytic subunit of Latilactobacillus sakei subsp. sakei (strain 23K) (Lactobacillus sakei subsp. sakei).